Reading from the N-terminus, the 84-residue chain is Molybdopterin synthase sulfur carrier subunit (84 aa).

At Gly84 the chain carries 1-thioglycine; alternate. Gly84 is modified (glycyl adenylate; alternate).

The protein belongs to the MoaD family. MOCS2A subfamily. In terms of assembly, heterotetramer; composed of 2 small (MOCS2A) and 2 large (MOCS2B) subunits. In terms of processing, C-terminal thiocarboxylation occurs in 2 steps, it is first acyl-adenylated (-COAMP) via the hesA/moeB/thiF part of MOCS3, then thiocarboxylated (-COSH) via the rhodanese domain of MOCS3.

The protein localises to the cytoplasm. The protein operates within cofactor biosynthesis; molybdopterin biosynthesis. Its function is as follows. Acts as a sulfur carrier required for molybdopterin biosynthesis. Component of the molybdopterin synthase complex that catalyzes the conversion of precursor Z into molybdopterin by mediating the incorporation of 2 sulfur atoms into precursor Z to generate a dithiolene group. In the complex, serves as sulfur donor by being thiocarboxylated (-COSH) at its C-terminus by MOCS3. After interaction with MOCS2B, the sulfur is then transferred to precursor Z to form molybdopterin. The polypeptide is Molybdopterin synthase sulfur carrier subunit (Caenorhabditis briggsae).